The primary structure comprises 733 residues: Ferric aerobactin receptor (733 aa).

A signal peptide spans M1 to A25. The TonB box signature appears at E31 to N38. Residues T43 to K153 form the TBDR plug domain. Residues E158–F733 form the TBDR beta-barrel domain. A TonB C-terminal box motif is present at residues Y716–F733.

This sequence belongs to the TonB-dependent receptor family.

The protein resides in the cell outer membrane. Functionally, receptor for aerobactin. The polypeptide is Ferric aerobactin receptor (iutA) (Klebsiella pneumoniae).